The primary structure comprises 348 residues: MQNNNPCGLDGFAFLEFSGPDRNKLHQQFSEMGFQAVAHHKNQDITLFKQGEIQFIVNAASHCQAEAHASTHGPGACAMGFKVKDAKAAFQHAIAHGGIAFQDAPHANHGLPAIQAIGGSVIYFVDEEHQPFSHEWNITSSEPVVGNGLTAIDHLTHNVYRGNMDKWASFYASIFNFQEIRFFNIKGKMTGLVSRALGSPCGKIKIPLNESKDDLSQIEEFLHEYHGEGIQHIALNTNDIYKTVNGLRKQGVKFLDVPDTYYEMINDRLPWHKEPLNQLHAEKILIDGEADPKDGLLLQIFTENIFGPVFFEIIQRKGNQGFGEGNFQALFEAIERDQVRRGTLKELT.

2 VOC domains span residues 11-141 (GFAF…ITSS) and 151-303 (AIDH…IFTE). Positions 154, 232, and 312 each coordinate Fe cation.

This sequence belongs to the 4HPPD family. Fe cation is required as a cofactor.

The enzyme catalyses 3-(4-hydroxyphenyl)pyruvate + O2 = homogentisate + CO2. Catalyzes the transformation of p-hydroxyphenylpyruvate into HGA. Has hemolytic and brown pigment production activity. This chain is 4-hydroxyphenylpyruvate dioxygenase (lly), found in Legionella pneumophila (strain Corby).